The primary structure comprises 948 residues: Sensor histidine kinase RcsC (948 aa).

Residues 1–20 lie on the Cytoplasmic side of the membrane; the sequence is MKYLASFRTTLKVSRYLFRA. Residues 21 to 41 form a helical membrane-spanning segment; that stretch reads LALLIWLLIAFVSVFYIVNAL. The Periplasmic segment spans residues 42-313; it reads HQRESEIRQE…PVDLVLERIR (272 aa). A helical membrane pass occupies residues 314 to 334; that stretch reads ILILNAILLNVLVGAGLFTLA. Over 335–948 the chain is Cytoplasmic; the sequence is RMYERRIFIP…YAERVRKTRA (614 aa). A PAS domain is found at 357–425; sequence QFNRKIVASA…VLTSNNTNLQ (69 aa). Residues 476-692 enclose the Histidine kinase domain; sequence TVSHELRTPL…QFTLRIPLYG (217 aa). Phosphohistidine; by autocatalysis is present on H479. The region spanning 705–805 is the ABL domain; the sequence is AGTCCWLAVR…ARIYSIELDS (101 aa). The Response regulatory domain occupies 826–940; the sequence is MILVVDDHPI…VLKQTLAVYA (115 aa). Residue D875 is modified to 4-aspartylphosphate.

Belongs to the RcsC family. Interacts with RcsD. Post-translationally, autophosphorylated. Activation probably requires a transfer of a phosphate group from a His in the transmitter domain to an Asp in the receiver domain.

The protein resides in the cell inner membrane. The catalysed reaction is ATP + protein L-histidine = ADP + protein N-phospho-L-histidine.. Its function is as follows. Component of the Rcs signaling system, which controls transcription of numerous genes. RcsC functions as a membrane-associated protein kinase that phosphorylates RcsD in response to environmental signals. The phosphoryl group is then transferred to the response regulator RcsB. This Salmonella typhimurium (strain LT2 / SGSC1412 / ATCC 700720) protein is Sensor histidine kinase RcsC.